The sequence spans 309 residues: Putative taste receptor type 2 member 33 (309 aa).

Position 1 (methionine 1) is a topological domain, extracellular. The chain crosses the membrane as a helical span at residues 2 to 22 (VYFLPIIFSILVVFAFVLGNF). At 23 to 46 (SNGFIALVNVIDWVKRQKISSADQ) the chain is on the cytoplasmic side. The chain crosses the membrane as a helical span at residues 47 to 67 (ILTALVVSRVGLLWVILLHWY). Over 68–86 (ANVFNSALYSLEVRIVASN) the chain is Extracellular. An N-linked (GlcNAc...) asparagine glycan is attached at asparagine 86. The helical transmembrane segment at 87 to 107 (ISAVINHFSIWLAASLSIFYL) threads the bilayer. The Cytoplasmic segment spans residues 108–127 (LKIANFSNLIFLHLKKRIKS). Residues 128-148 (VVLVILLGPLVFLICNLAVIT) traverse the membrane as a helical segment. At 149–181 (MDERVWTKEYEGNVTWKIKLRNAIHLSSLTVTT) the chain is on the extracellular side. The N-linked (GlcNAc...) asparagine glycan is linked to asparagine 161. Residues 182 to 202 (LANLIPFTLSLICFLLLICSL) traverse the membrane as a helical segment. The Cytoplasmic segment spans residues 203–229 (CKHLKKMQLHSKGSQDPSTKVHIKALQ). A helical membrane pass occupies residues 230–250 (TVISFLMLCAIYFLSIMISVW). Residues 251 to 259 (NLRSLENKP) are Extracellular-facing. The chain crosses the membrane as a helical span at residues 260 to 280 (VFMFCKAIRFSYPSIHPFILI). Topologically, residues 281 to 309 (WGNKKLKQTFLSVFWQVRYWVKGEKPSSP) are cytoplasmic.

Belongs to the G-protein coupled receptor T2R family.

The protein resides in the membrane. In terms of biological role, putative taste receptor which may play a role in the perception of bitterness. The polypeptide is Putative taste receptor type 2 member 33 (Homo sapiens (Human)).